Here is a 418-residue protein sequence, read N- to C-terminus: Thyroid hormone receptor alpha-A (418 aa).

A disordered region spans residues 1–38 (MDQNLSGLDCLSEPDEKRWPDGKRKRKNSQCMGKSGMS). The interval 1–60 (MDQNLSGLDCLSEPDEKRWPDGKRKRKNSQCMGKSGMSGDSLVSLPSAGYIPSYLDKDEP) is modulating. 2 NR C4-type zinc fingers span residues 61–81 (CVVC…CEGC) and 99–123 (CKYD…FKKC). Positions 61 to 135 (CVVCSDKATG…VGMAMDLVLD (75 aa)) form a DNA-binding region, nuclear receptor. Residues 171-415 (EEWELIRIVT…PPLFLEVFED (245 aa)) form the NR LBD domain.

This sequence belongs to the nuclear hormone receptor family. NR1 subfamily. Binds to thyroid hormone receptor element (TRE) weakly as homodimers and monomers, but binds TRE with much higher affinity as heterodimers with retinoid X receptors. Can bind DNA as a heterodimer with either rxra or rxrg.

It localises to the nucleus. Functionally, high affinity receptor for triiodothyronine (T3). In Xenopus laevis (African clawed frog), this protein is Thyroid hormone receptor alpha-A (thra-a).